We begin with the raw amino-acid sequence, 216 residues long: Octanoyltransferase (216 aa).

The BPL/LPL catalytic domain occupies 32–211; sequence QEASEMLWFL…RFPYFLEALQ (180 aa). Residues 71–78, 142–144, and 155–157 each bind substrate; these read RGGRYTYH, AIG, and GFS. The active-site Acyl-thioester intermediate is Cys-173.

The protein belongs to the LipB family.

The protein resides in the cytoplasm. It carries out the reaction octanoyl-[ACP] + L-lysyl-[protein] = N(6)-octanoyl-L-lysyl-[protein] + holo-[ACP] + H(+). It functions in the pathway protein modification; protein lipoylation via endogenous pathway; protein N(6)-(lipoyl)lysine from octanoyl-[acyl-carrier-protein]: step 1/2. Functionally, catalyzes the transfer of endogenously produced octanoic acid from octanoyl-acyl-carrier-protein onto the lipoyl domains of lipoate-dependent enzymes. Lipoyl-ACP can also act as a substrate although octanoyl-ACP is likely to be the physiological substrate. This is Octanoyltransferase from Zymomonas mobilis subsp. mobilis (strain ATCC 31821 / ZM4 / CP4).